The following is a 339-amino-acid chain: Serine racemase (339 aa).

Residues S43 and K63 each coordinate ATP. The active-site Proton acceptor is K68. K68 is subject to N6-(pyridoxal phosphate)lysine. Ca(2+) is bound at residue T90. S93 serves as the catalytic Proton acceptor. Residue N95 coordinates pyridoxal 5'-phosphate. At C122 the chain carries S-nitrosocysteine. Y130 contributes to the ATP binding site. A Mg(2+)-binding site is contributed by D187. Pyridoxal 5'-phosphate is bound by residues G195, G196, and G197. The Ca(2+) site is built by E219, A223, and D225. Residues E219, A223, and D225 each contribute to the Mg(2+) site. E219, A223, and D225 together coordinate Mn(2+). K287 provides a ligand contact to ATP. S323 contacts pyridoxal 5'-phosphate. N326 is a binding site for ATP.

The protein belongs to the serine/threonine dehydratase family. Requires Mg(2+) as cofactor. Mn(2+) serves as cofactor. It depends on Ca(2+) as a cofactor. The cofactor is pyridoxal 5'-phosphate.

The enzyme catalyses L-serine = D-serine. It carries out the reaction L-serine = pyruvate + NH4(+). The catalysed reaction is D-serine = pyruvate + NH4(+). Functionally, catalyzes the synthesis of D-serine from L-serine. Has dehydratase activity towards both L-serine and D-serine. The sequence is that of Serine racemase from Oryza sativa subsp. indica (Rice).